Here is a 276-residue protein sequence, read N- to C-terminus: Beta-lactamase OXA-1 (276 aa).

The first 25 residues, 1-25 (MKNTIHINFAIFLIIANIIYSSASA), serve as a signal peptide directing secretion. Residue Ser71 is the Acyl-ester intermediate of the active site. A beta-lactam contacts are provided by Ser71, Lys74, Ser118, Thr216, and Ala218. Lys74 is subject to N6-carboxylysine.

This sequence belongs to the class-D beta-lactamase family. As to quaternary structure, monomer.

The protein resides in the periplasm. It carries out the reaction a beta-lactam + H2O = a substituted beta-amino acid. With respect to regulation, inhibited by penicillin sulfones. Only weakly inhibited by clavulanic acid and sulbactam. Functionally, class D beta-lactamase which confers resistance to the beta-lactam antibiotics, including amoxicillin and ticarcillin. Acts via hydrolysis of the beta-lactam ring. Has penicillin- and cephalosporin-hydrolyzing activities. The sequence is that of Beta-lactamase OXA-1 from Escherichia coli.